We begin with the raw amino-acid sequence, 202 residues long: dITP/XTP pyrophosphatase (202 aa).

9–14 (TGNKGK) is a substrate binding site. Residue aspartate 73 is the Proton acceptor of the active site. Position 73 (aspartate 73) interacts with Mg(2+). Substrate is bound by residues serine 74, 158–161 (FGYD), lysine 181, and 186–187 (HR).

The protein belongs to the HAM1 NTPase family. In terms of assembly, homodimer. It depends on Mg(2+) as a cofactor.

The enzyme catalyses XTP + H2O = XMP + diphosphate + H(+). The catalysed reaction is dITP + H2O = dIMP + diphosphate + H(+). It carries out the reaction ITP + H2O = IMP + diphosphate + H(+). Functionally, pyrophosphatase that catalyzes the hydrolysis of nucleoside triphosphates to their monophosphate derivatives, with a high preference for the non-canonical purine nucleotides XTP (xanthosine triphosphate), dITP (deoxyinosine triphosphate) and ITP. Seems to function as a house-cleaning enzyme that removes non-canonical purine nucleotides from the nucleotide pool, thus preventing their incorporation into DNA/RNA and avoiding chromosomal lesions. In Lactobacillus acidophilus (strain ATCC 700396 / NCK56 / N2 / NCFM), this protein is dITP/XTP pyrophosphatase.